The following is a 416-amino-acid chain: Cysteate synthase (416 aa).

Position 104 is an N6-(pyridoxal phosphate)lysine (lysine 104). Pyridoxal 5'-phosphate is bound at residue asparagine 130.

This sequence belongs to the threonine synthase family. Cysteate synthase subfamily. In terms of assembly, homotrimer. Requires pyridoxal 5'-phosphate as cofactor.

It carries out the reaction O-phospho-L-serine + sulfite + H(+) = L-cysteate + phosphate. Its pathway is cofactor biosynthesis; coenzyme M biosynthesis. Its function is as follows. Specifically catalyzes the beta-elimination of phosphate from L-phosphoserine and the beta-addition of sulfite to the dehydroalanine intermediate to produce L-cysteate. This chain is Cysteate synthase, found in Methanosarcina mazei (strain ATCC BAA-159 / DSM 3647 / Goe1 / Go1 / JCM 11833 / OCM 88) (Methanosarcina frisia).